The primary structure comprises 694 residues: Long-chain-fatty-acid--CoA ligase 4 (694 aa).

Residues 1 to 21 (MTEQYSVAVGEAANEHETAPR) form a disordered region. Position 269 to 280 (269 to 280 (YTSGSTGTPKGV)) interacts with ATP. The FACS signature appears at 527 to 576 (DGWFRTGDIAEWTPKGQVKIIDRKKNLVKTLNGEYIALEKLESIYRSNPY).

It belongs to the ATP-dependent AMP-binding enzyme family. Interacts with FAT1. Mg(2+) is required as a cofactor.

Its subcellular location is the lipid droplet. The enzyme catalyses a long-chain fatty acid + ATP + CoA = a long-chain fatty acyl-CoA + AMP + diphosphate. The catalysed reaction is (9Z)-hexadecenoate + ATP + CoA = (9Z)-hexadecenoyl-CoA + AMP + diphosphate. It catalyses the reaction (9Z)-octadecenoate + ATP + CoA = (9Z)-octadecenoyl-CoA + AMP + diphosphate. It carries out the reaction hexadecanoate + ATP + CoA = hexadecanoyl-CoA + AMP + diphosphate. Activates long-chain fatty acids (LCFA) by esterification of the fatty acids into metabolically active CoA-thioesters for subsequent degradation or incorporation into phospholipids. Also facilitates the transport of LCFAs into the cell, either by active transport or by decreasing the intracellular LCFA concentration. Contributes, with FAA1, to the activation of imported myristate. Also involved in long-chain base (LCB) uptake. In contrast ot LCFA uptake, LCB uptake does not require ATP, suggesting that the enzyme is directly involved in LCB uptake. Involved in the sphingolipid-to-glycerolipid metabolic pathway, converting the sphingolipid metabolite hexadecenoic acid to hexadecenoyl-CoA, which is then further converted to glycerolipids. The sequence is that of Long-chain-fatty-acid--CoA ligase 4 (FAA4) from Saccharomyces cerevisiae (strain ATCC 204508 / S288c) (Baker's yeast).